Here is a 189-residue protein sequence, read N- to C-terminus: UPF0200 protein Smar_1234 (189 aa).

10–17 (GMPGAGKS) contributes to the ATP binding site.

This sequence belongs to the UPF0200 family.

In Staphylothermus marinus (strain ATCC 43588 / DSM 3639 / JCM 9404 / F1), this protein is UPF0200 protein Smar_1234.